The primary structure comprises 476 residues: Aspartyl/glutamyl-tRNA(Asn/Gln) amidotransferase subunit B (476 aa).

Belongs to the GatB/GatE family. GatB subfamily. In terms of assembly, heterotrimer of A, B and C subunits.

The enzyme catalyses L-glutamyl-tRNA(Gln) + L-glutamine + ATP + H2O = L-glutaminyl-tRNA(Gln) + L-glutamate + ADP + phosphate + H(+). It carries out the reaction L-aspartyl-tRNA(Asn) + L-glutamine + ATP + H2O = L-asparaginyl-tRNA(Asn) + L-glutamate + ADP + phosphate + 2 H(+). Functionally, allows the formation of correctly charged Asn-tRNA(Asn) or Gln-tRNA(Gln) through the transamidation of misacylated Asp-tRNA(Asn) or Glu-tRNA(Gln) in organisms which lack either or both of asparaginyl-tRNA or glutaminyl-tRNA synthetases. The reaction takes place in the presence of glutamine and ATP through an activated phospho-Asp-tRNA(Asn) or phospho-Glu-tRNA(Gln). This chain is Aspartyl/glutamyl-tRNA(Asn/Gln) amidotransferase subunit B, found in Clostridium botulinum (strain Okra / Type B1).